Here is a 263-residue protein sequence, read N- to C-terminus: Thiazole synthase (263 aa).

Lys100 acts as the Schiff-base intermediate with DXP in catalysis. Residues Gly161, 187–188 (AG), and 209–210 (NT) each bind 1-deoxy-D-xylulose 5-phosphate.

This sequence belongs to the ThiG family. As to quaternary structure, homotetramer. Forms heterodimers with either ThiH or ThiS.

Its subcellular location is the cytoplasm. It carries out the reaction [ThiS sulfur-carrier protein]-C-terminal-Gly-aminoethanethioate + 2-iminoacetate + 1-deoxy-D-xylulose 5-phosphate = [ThiS sulfur-carrier protein]-C-terminal Gly-Gly + 2-[(2R,5Z)-2-carboxy-4-methylthiazol-5(2H)-ylidene]ethyl phosphate + 2 H2O + H(+). It functions in the pathway cofactor biosynthesis; thiamine diphosphate biosynthesis. In terms of biological role, catalyzes the rearrangement of 1-deoxy-D-xylulose 5-phosphate (DXP) to produce the thiazole phosphate moiety of thiamine. Sulfur is provided by the thiocarboxylate moiety of the carrier protein ThiS. In vitro, sulfur can be provided by H(2)S. This Shouchella clausii (strain KSM-K16) (Alkalihalobacillus clausii) protein is Thiazole synthase.